The following is a 313-amino-acid chain: UPF0761 membrane protein VV0203 (313 aa).

The next 6 helical transmembrane spans lie at 41–61, 104–124, 139–159, 185–205, 215–235, and 249–269; these read YLAY…LSIL, MTAV…SNID, AVFS…LVGA, LLRW…YLLV, AVVG…GFAA, and ALAA…IVLI. The tract at residues 293-313 is disordered; the sequence is LPNNDTELEKDTQRDRFDSES. Residues 299-313 show a composition bias toward basic and acidic residues; that stretch reads ELEKDTQRDRFDSES.

Belongs to the UPF0761 family.

It localises to the cell inner membrane. This is UPF0761 membrane protein VV0203 from Vibrio vulnificus (strain YJ016).